Here is a 107-residue protein sequence, read N- to C-terminus: Antimicrobial peptide damicornin (107 aa).

Positions 1–22 (MKVLVILFGAMLVLMEFQKASA) are cleaved as a signal peptide. Positions 23-67 (ATLLEDFDDDDDLLDDGGDFDLEANSDASSGNGNDSNDAVPEKRR) are excised as a propeptide. Over residues 37–46 (DDGGDFDLEA) the composition is skewed to acidic residues. The segment at 37-62 (DDGGDFDLEANSDASSGNGNDSNDAV) is disordered. The segment covering 47–61 (NSDASSGNGNDSNDA) has biased composition (low complexity). 3 disulfide bridges follow: cysteine 69–cysteine 105, cysteine 78–cysteine 99, and cysteine 85–cysteine 103. Arginine 106 bears the Arginine amide mark.

This sequence belongs to the coral AMP family. As to expression, is specifically expressed in the granular cells of the ectoderm.

It localises to the cytoplasm. The protein resides in the stress granule. It is found in the secreted. Its function is as follows. Cationic peptide with probable antimicrobial activity against coral pathogens. Shows in vitro activity against Gram-positive bacteria and the filamentous fungus F.oxysporum (MIC=1.25 uM). Gram-positive bacteria tested are B.megaterium (MIC=20 uM), S.aureus (MIC=5 uM), M. luteus (MIC=1.25 uM), B.stationis (MIC=10 uM), M.maritypicum (MIC=20 uM). Has no or little effect against Gram-negative bacteria (the coral pathogen V.coralliilyticus (MIC&gt;20 uM), V.aesturianus (MIC&gt;20 uM), V.shiloi (MIC&gt;20 uM), and E.coli (MIC=10 uM)). Has no hemolytic activity against sheep erythrocytes. This chain is Antimicrobial peptide damicornin, found in Pocillopora damicornis (Cauliflower coral).